Consider the following 214-residue polypeptide: Large ribosomal subunit protein uL16-like (214 aa).

The protein belongs to the universal ribosomal protein uL16 family. Component of the 60S large ribosomal subunit (LSU).

It is found in the cytoplasm. Functionally, testis-specific component of the ribosome, which is required for the transition from prophase to metaphase in male meiosis I. Compensates for the inactivated X-linked RPL10 paralog during spermatogenesis. The ribosome is a large ribonucleoprotein complex responsible for the synthesis of proteins in the cell. The small ribosomal subunit (SSU) binds messenger RNAs (mRNAs) and translates the encoded message by selecting cognate aminoacyl-transfer RNA (tRNA) molecules. The large subunit (LSU) contains the ribosomal catalytic site termed the peptidyl transferase center (PTC), which catalyzes the formation of peptide bonds, thereby polymerizing the amino acids delivered by tRNAs into a polypeptide chain. The nascent polypeptides leave the ribosome through a tunnel in the LSU and interact with protein factors that function in enzymatic processing, targeting, and the membrane insertion of nascent chains at the exit of the ribosomal tunnel. The sequence is that of Large ribosomal subunit protein uL16-like (RPL10L) from Macaca fascicularis (Crab-eating macaque).